The sequence spans 204 residues: Urease accessory protein UreG (204 aa).

A GTP-binding site is contributed by 12–19; sequence GPVGSGKT.

It belongs to the SIMIBI class G3E GTPase family. UreG subfamily. Homodimer. UreD, UreF and UreG form a complex that acts as a GTP-hydrolysis-dependent molecular chaperone, activating the urease apoprotein by helping to assemble the nickel containing metallocenter of UreC. The UreE protein probably delivers the nickel.

The protein localises to the cytoplasm. Functionally, facilitates the functional incorporation of the urease nickel metallocenter. This process requires GTP hydrolysis, probably effectuated by UreG. The chain is Urease accessory protein UreG from Hahella chejuensis (strain KCTC 2396).